Reading from the N-terminus, the 97-residue chain is Co-chaperonin GroES (97 aa).

Belongs to the GroES chaperonin family. In terms of assembly, heptamer of 7 subunits arranged in a ring. Interacts with the chaperonin GroEL.

Its subcellular location is the cytoplasm. In terms of biological role, together with the chaperonin GroEL, plays an essential role in assisting protein folding. The GroEL-GroES system forms a nano-cage that allows encapsulation of the non-native substrate proteins and provides a physical environment optimized to promote and accelerate protein folding. GroES binds to the apical surface of the GroEL ring, thereby capping the opening of the GroEL channel. The chain is Co-chaperonin GroES from Tolumonas auensis (strain DSM 9187 / NBRC 110442 / TA 4).